The following is a 354-amino-acid chain: MKQQQQTPELFEDFHMPITLDVSNISAYSPFLVPQDHLGHSGVFMGMSAFMLFLFIAGTAINVLTIVCTIQYKKLRSHLNYILVNLAISNLWVSVFGSSVAFYAFYKKYFVFGPIGCKIEGFTSTIGGMVSLWSLAVVALERWLVICKPLGNFTFKTPHAIAGCILPWCMALAAGLPPLLGWSRYIPEGLQCSCGPDWYTTNNKFNNESYVMFLFCFCFAVPFSTIVFCYGQLLITLKLAAKAQADSASTQKAEREVTKMVVVMVFGFLICWGPYAIFAIWVVSNRGAPFDLRLATIPSCLCKASTVYNPVIYVLMNKQFRSCMMKMVFNKNIEEDEASSSSQVTQVSSVAPEK.

Residues 1 to 43 (MKQQQQTPELFEDFHMPITLDVSNISAYSPFLVPQDHLGHSGV) are Extracellular-facing. The N-linked (GlcNAc...) asparagine glycan is linked to Asn-24. A helical transmembrane segment spans residues 44–68 (FMGMSAFMLFLFIAGTAINVLTIVC). At 69 to 80 (TIQYKKLRSHLN) the chain is on the cytoplasmic side. A helical membrane pass occupies residues 81–106 (YILVNLAISNLWVSVFGSSVAFYAFY). At 107-120 (KKYFVFGPIGCKIE) the chain is on the extracellular side. Cysteines 117 and 194 form a disulfide. A helical membrane pass occupies residues 121-140 (GFTSTIGGMVSLWSLAVVAL). Topologically, residues 141-159 (ERWLVICKPLGNFTFKTPH) are cytoplasmic. Residues 160-183 (AIAGCILPWCMALAAGLPPLLGWS) traverse the membrane as a helical segment. The Extracellular segment spans residues 184–209 (RYIPEGLQCSCGPDWYTTNNKFNNES). N-linked (GlcNAc...) asparagine glycosylation occurs at Asn-207. A helical membrane pass occupies residues 210-237 (YVMFLFCFCFAVPFSTIVFCYGQLLITL). At 238 to 259 (KLAAKAQADSASTQKAEREVTK) the chain is on the cytoplasmic side. The chain crosses the membrane as a helical span at residues 260 to 283 (MVVVMVFGFLICWGPYAIFAIWVV). Topologically, residues 284–291 (SNRGAPFD) are extracellular. The helical transmembrane segment at 292–316 (LRLATIPSCLCKASTVYNPVIYVLM) threads the bilayer. Position 303 is an N6-(retinylidene)lysine (Lys-303). Residues 317–354 (NKQFRSCMMKMVFNKNIEEDEASSSSQVTQVSSVAPEK) lie on the Cytoplasmic side of the membrane.

Belongs to the G-protein coupled receptor 1 family. Opsin subfamily. Phosphorylated on some or all of the serine and threonine residues present in the C-terminal region. Retinal long single cone outer segments.

It is found in the membrane. Functionally, visual pigments are the light-absorbing molecules that mediate vision. They consist of an apoprotein, opsin, covalently linked to cis-retinal. In Danio rerio (Zebrafish), this protein is Opsin-1, short-wave-sensitive 2 (opn1sw2).